A 160-amino-acid polypeptide reads, in one-letter code: 6,7-dimethyl-8-ribityllumazine synthase (160 aa).

5-amino-6-(D-ribitylamino)uracil contacts are provided by residues W28, A59–E61, and C81–I83. E86 to T87 provides a ligand contact to (2S)-2-hydroxy-3-oxobutyl phosphate. H89 functions as the Proton donor in the catalytic mechanism. N114 is a 5-amino-6-(D-ribitylamino)uracil binding site. R128 contacts (2S)-2-hydroxy-3-oxobutyl phosphate.

Belongs to the DMRL synthase family.

The catalysed reaction is (2S)-2-hydroxy-3-oxobutyl phosphate + 5-amino-6-(D-ribitylamino)uracil = 6,7-dimethyl-8-(1-D-ribityl)lumazine + phosphate + 2 H2O + H(+). Its pathway is cofactor biosynthesis; riboflavin biosynthesis; riboflavin from 2-hydroxy-3-oxobutyl phosphate and 5-amino-6-(D-ribitylamino)uracil: step 1/2. In terms of biological role, catalyzes the formation of 6,7-dimethyl-8-ribityllumazine by condensation of 5-amino-6-(D-ribitylamino)uracil with 3,4-dihydroxy-2-butanone 4-phosphate. This is the penultimate step in the biosynthesis of riboflavin. The protein is 6,7-dimethyl-8-ribityllumazine synthase of Corynebacterium jeikeium (strain K411).